The primary structure comprises 89 residues: Small ribosomal subunit protein uS14 (89 aa).

This sequence belongs to the universal ribosomal protein uS14 family. In terms of assembly, part of the 30S ribosomal subunit. Contacts proteins S3 and S10.

Its function is as follows. Binds 16S rRNA, required for the assembly of 30S particles and may also be responsible for determining the conformation of the 16S rRNA at the A site. The polypeptide is Small ribosomal subunit protein uS14 (Lacticaseibacillus casei (strain BL23) (Lactobacillus casei)).